Reading from the N-terminus, the 254-residue chain is MSLTNKNVVFVAGLGGIGLDTSRELVKRDLKNLVILDRIDNAAAIAELKAINPKVTVTFYPYDVTVPVAETTKLLKTIFAQIKTIDVLINGAGILDDHQIERTIAVNYSGLVNTTTAILDFWDKRKGGPGGIICNIGSVTGFNAIYQVPVYSGSKAAVVNFTSSLAKLAPITGVTAYTVNPGITKTTLVHKFNSWLDVEPRVAEKLLEHPTQTSQQCAENFVKAIELNKNGAIWKLDLGTLESITWTKHWDSGI.

10 to 33 contributes to the NAD(+) binding site; that stretch reads FVAGLGGIGLDTSRELVKRDLKNL. A substrate-binding site is contributed by serine 138. Tyrosine 151 serves as the catalytic Proton acceptor.

It belongs to the short-chain dehydrogenases/reductases (SDR) family. In terms of assembly, homodimer.

The catalysed reaction is a primary alcohol + NAD(+) = an aldehyde + NADH + H(+). It carries out the reaction a secondary alcohol + NAD(+) = a ketone + NADH + H(+). The polypeptide is Alcohol dehydrogenase (Adh) (Drosophila subobscura (Fruit fly)).